The chain runs to 210 residues: Peroxiredoxin-5, mitochondrial (210 aa).

A mitochondrion-targeting transit peptide spans 1–48 (MLQLGLRVLGCKASSVLRASTCLAGRAGRKEAGWECGGARSFSSSAVT). A Thioredoxin domain is found at 52–210 (IKVGDAIPSV…SLAPNILSQL (159 aa)). Lys-70 bears the N6-acetyllysine; alternate mark. Lys-70 bears the N6-succinyllysine; alternate mark. The residue at position 71 (Lys-71) is an N6-acetyllysine. Position 79 is an N6-acetyllysine; alternate (Lys-79). N6-succinyllysine; alternate is present on Lys-79. Cys-96 serves as the catalytic Cysteine sulfenic acid (-SOH) intermediate. Residue Cys-96 is the site of S-palmitoyl cysteine attachment. Residues Cys-96 and Cys-200 are joined by a disulfide bond. Lys-112 bears the N6-succinyllysine mark. Ser-167 and Ser-178 each carry phosphoserine. The Microbody targeting signal motif lies at 208-210 (SQL).

The protein belongs to the peroxiredoxin family. Prx5 subfamily. As to quaternary structure, monomer. In terms of processing, S-palmitoylated. Palmitoylation occurs on the active site, inhibiting its reactivity; therefore PRDX5 palmitoylation status determines its antioxidant capacity. S-palmitoylated. Depalmitoylated by ABHD10. In terms of tissue distribution, widely expressed.

It localises to the mitochondrion. It is found in the cytoplasm. Its subcellular location is the peroxisome matrix. The catalysed reaction is a hydroperoxide + [thioredoxin]-dithiol = an alcohol + [thioredoxin]-disulfide + H2O. Thiol-specific peroxidase that catalyzes the reduction of hydrogen peroxide and organic hydroperoxides to water and alcohols, respectively. Plays a role in cell protection against oxidative stress by detoxifying peroxides and as sensor of hydrogen peroxide-mediated signaling events. The polypeptide is Peroxiredoxin-5, mitochondrial (Mus musculus (Mouse)).